The chain runs to 437 residues: GTPase Obg (437 aa).

One can recognise an Obg domain in the interval 2–160 (SMFLDTAKIS…RQLELELKIL (159 aa)). The 178-residue stretch at 161–338 (ADVGLVGFPS…LLEATAELLA (178 aa)) folds into the OBG-type G domain. Residues 167–174 (GFPSVGKS), 192–196 (FTTIV), 214–217 (DLPG), 284–287 (NKMD), and 319–321 (SSL) each bind GTP. Residues S174 and T194 each coordinate Mg(2+). The 79-residue stretch at 359–437 (GFAETEKDFE…IGKFEFEFVD (79 aa)) folds into the OCT domain.

It belongs to the TRAFAC class OBG-HflX-like GTPase superfamily. OBG GTPase family. As to quaternary structure, monomer. Mg(2+) serves as cofactor.

The protein resides in the cytoplasm. An essential GTPase which binds GTP, GDP and possibly (p)ppGpp with moderate affinity, with high nucleotide exchange rates and a fairly low GTP hydrolysis rate. Plays a role in control of the cell cycle, stress response, ribosome biogenesis and in those bacteria that undergo differentiation, in morphogenesis control. The protein is GTPase Obg of Streptococcus pyogenes serotype M4 (strain MGAS10750).